A 616-amino-acid polypeptide reads, in one-letter code: Prolactin receptor (616 aa).

A signal peptide spans 1-24 (MKENVASMIVFLLLLFLNIRLLKG). Residues 25 to 234 (QSPPGKPFIF…QIPNDFTMKD (210 aa)) lie on the Extracellular side of the membrane. Fibronectin type-III domains follow at residues 27-128 (PPGK…VEPD) and 129-229 (PPVN…IPND). A disulfide bridge connects residues Cys-36 and Cys-46. Asn-59 is a glycosylation site (N-linked (GlcNAc...) asparagine). Cys-75 and Cys-86 form a disulfide bridge. N-linked (GlcNAc...) asparagine glycosylation is found at Asn-104 and Asn-132. Residues Asp-211 and His-212 each contribute to the Zn(2+) site. The WSXWS motif motif lies at 215–219 (WSVWS). The helical transmembrane segment at 235-258 (ITVWIFVAVLSTIICLIMVWAVAL) threads the bilayer. Residues 259 to 616 (KGYSMVTCIF…DPACFMHSLH (358 aa)) lie on the Cytoplasmic side of the membrane. The short motif at 267–275 (IFPPVPGPK) is the Box 1 motif element. Disordered regions lie at residues 326–375 (MPAH…STFH), 454–492 (QSSKTTEAAGEEKATKQREVESSHSKAEQDTGWLLPKEK), and 568–593 (ESTKEAPPSPSQNQAEKDLSSFSTAP). Basic and acidic residues predominate over residues 463-482 (GEEKATKQREVESSHSKAEQ).

It belongs to the type I cytokine receptor family. Type 1 subfamily. Interacts with SMARCA1. Interacts with NEK3 and VAV2 and this interaction is prolactin-dependent.

The protein resides in the membrane. This is a receptor for the anterior pituitary hormone prolactin. The polypeptide is Prolactin receptor (PRLR) (Oryctolagus cuniculus (Rabbit)).